The sequence spans 398 residues: Acetate kinase (398 aa).

Asn7 provides a ligand contact to Mg(2+). ATP is bound at residue Lys14. Arg91 is a substrate binding site. Catalysis depends on Asp148, which acts as the Proton donor/acceptor. ATP is bound by residues 208 to 212 (HLGNG), 282 to 284 (DFR), and 330 to 334 (GVGEN). Glu383 serves as a coordination point for Mg(2+).

This sequence belongs to the acetokinase family. In terms of assembly, homodimer. Mg(2+) is required as a cofactor. The cofactor is Mn(2+).

It localises to the cytoplasm. The enzyme catalyses acetate + ATP = acetyl phosphate + ADP. The protein operates within metabolic intermediate biosynthesis; acetyl-CoA biosynthesis; acetyl-CoA from acetate: step 1/2. Its function is as follows. Catalyzes the formation of acetyl phosphate from acetate and ATP. Can also catalyze the reverse reaction. This is Acetate kinase from Carboxydothermus hydrogenoformans (strain ATCC BAA-161 / DSM 6008 / Z-2901).